The primary structure comprises 503 residues: Maturase K (503 aa).

It belongs to the intron maturase 2 family. MatK subfamily.

It localises to the plastid. The protein localises to the chloroplast. Functionally, usually encoded in the trnK tRNA gene intron. Probably assists in splicing its own and other chloroplast group II introns. This Panax ginseng (Korean ginseng) protein is Maturase K.